The chain runs to 116 residues: Large ribosomal subunit protein uL18 (116 aa).

Belongs to the universal ribosomal protein uL18 family. In terms of assembly, part of the 50S ribosomal subunit; part of the 5S rRNA/L5/L18/L25 subcomplex. Contacts the 5S and 23S rRNAs.

In terms of biological role, this is one of the proteins that bind and probably mediate the attachment of the 5S RNA into the large ribosomal subunit, where it forms part of the central protuberance. This Mycoplasma mycoides subsp. mycoides SC (strain CCUG 32753 / NCTC 10114 / PG1) protein is Large ribosomal subunit protein uL18.